Here is a 261-residue protein sequence, read N- to C-terminus: Cytochrome c oxidase subunit 3 (261 aa).

The Mitochondrial matrix segment spans residues 1-15; that stretch reads MTHQTHAYHMVNPSP. The chain crosses the membrane as a helical span at residues 16-34; the sequence is WPLTGALSALLMTSGLIMW. Over 35–40 the chain is Mitochondrial intermembrane; sequence FHFNST. A helical membrane pass occupies residues 41–66; the sequence is TLLMLGLTTNMLTMYQWWRDVVREST. Topologically, residues 67–72 are mitochondrial matrix; that stretch reads FQGHHT. Residues 73 to 105 traverse the membrane as a helical segment; the sequence is PNVQKGLRYGMILFIISEVLFFTGFFWAFYHSS. Over 106–128 the chain is Mitochondrial intermembrane; the sequence is LAPTPELGGCWPPTGIHPLNPLE. A helical membrane pass occupies residues 129 to 152; the sequence is VPLLNTSVLLASGVSITWAHHSLM. Residues 153 to 155 lie on the Mitochondrial matrix side of the membrane; that stretch reads EGN. The chain crosses the membrane as a helical span at residues 156 to 183; that stretch reads RNHMLQALFITIALGVYFTLLQASEYYE. Residues 184–190 lie on the Mitochondrial intermembrane side of the membrane; it reads APFTISD. A helical membrane pass occupies residues 191–223; the sequence is GVYGSTFFVATGFHGLHVIIGSTFLIVCFFRQL. The Mitochondrial matrix portion of the chain corresponds to 224 to 232; it reads KFHFTSNHH. Residues 233–256 traverse the membrane as a helical segment; the sequence is FGFEAAAWYWHFVDVVWLFLYVSI. At 257-261 the chain is on the mitochondrial intermembrane side; the sequence is YWWGS.

This sequence belongs to the cytochrome c oxidase subunit 3 family. In terms of assembly, component of the cytochrome c oxidase (complex IV, CIV), a multisubunit enzyme composed of 14 subunits. The complex is composed of a catalytic core of 3 subunits MT-CO1, MT-CO2 and MT-CO3, encoded in the mitochondrial DNA, and 11 supernumerary subunits COX4I, COX5A, COX5B, COX6A, COX6B, COX6C, COX7A, COX7B, COX7C, COX8 and NDUFA4, which are encoded in the nuclear genome. The complex exists as a monomer or a dimer and forms supercomplexes (SCs) in the inner mitochondrial membrane with NADH-ubiquinone oxidoreductase (complex I, CI) and ubiquinol-cytochrome c oxidoreductase (cytochrome b-c1 complex, complex III, CIII), resulting in different assemblies (supercomplex SCI(1)III(2)IV(1) and megacomplex MCI(2)III(2)IV(2)).

The protein resides in the mitochondrion inner membrane. The enzyme catalyses 4 Fe(II)-[cytochrome c] + O2 + 8 H(+)(in) = 4 Fe(III)-[cytochrome c] + 2 H2O + 4 H(+)(out). Its function is as follows. Component of the cytochrome c oxidase, the last enzyme in the mitochondrial electron transport chain which drives oxidative phosphorylation. The respiratory chain contains 3 multisubunit complexes succinate dehydrogenase (complex II, CII), ubiquinol-cytochrome c oxidoreductase (cytochrome b-c1 complex, complex III, CIII) and cytochrome c oxidase (complex IV, CIV), that cooperate to transfer electrons derived from NADH and succinate to molecular oxygen, creating an electrochemical gradient over the inner membrane that drives transmembrane transport and the ATP synthase. Cytochrome c oxidase is the component of the respiratory chain that catalyzes the reduction of oxygen to water. Electrons originating from reduced cytochrome c in the intermembrane space (IMS) are transferred via the dinuclear copper A center (CU(A)) of subunit 2 and heme A of subunit 1 to the active site in subunit 1, a binuclear center (BNC) formed by heme A3 and copper B (CU(B)). The BNC reduces molecular oxygen to 2 water molecules using 4 electrons from cytochrome c in the IMS and 4 protons from the mitochondrial matrix. This chain is Cytochrome c oxidase subunit 3 (MT-CO3), found in Gazella cuvieri (Cuvier's gazelle).